Reading from the N-terminus, the 207-residue chain is uncharacterized protein (207 aa).

Positions 1–19 (MRHGLLALICWLCCVVAHS) are cleaved as a signal peptide.

It to P.aeruginosa PA4490 and T.maritima TM0986.

This is an uncharacterized protein from Escherichia coli (strain K12).